Consider the following 86-residue polypeptide: Large ribosomal subunit protein uL23 (86 aa).

It belongs to the universal ribosomal protein uL23 family. Part of the 50S ribosomal subunit. Contacts protein L29.

In terms of biological role, binds to 23S rRNA. One of the proteins that surrounds the polypeptide exit tunnel on the outside of the ribosome. The protein is Large ribosomal subunit protein uL23 of Methanococcus maripaludis (strain C5 / ATCC BAA-1333).